Reading from the N-terminus, the 231-residue chain is Probable septum site-determining protein MinC (231 aa).

The disordered stretch occupies residues 102–125; sequence KEKAPRPAPAPQAPTQNTTPVTKT. The segment covering 114 to 123 has biased composition (low complexity); it reads APTQNTTPVT.

It belongs to the MinC family. Interacts with MinD and FtsZ.

Its function is as follows. Cell division inhibitor that blocks the formation of polar Z ring septums. Rapidly oscillates between the poles of the cell to destabilize FtsZ filaments that have formed before they mature into polar Z rings. Prevents FtsZ polymerization. The protein is Probable septum site-determining protein MinC of Escherichia coli O45:K1 (strain S88 / ExPEC).